Reading from the N-terminus, the 439-residue chain is MSIISDIYAREVLDSRGNPTVEVELYTEAGAMGRGIVPSGASTGEHEAVELRDGDKSRFMGKGVTKAVDNVNNIIAKEIIGYDVTDQRAIDQAMIDLDGTPNKGKLGANAILGVSLAAARAAADELGQPLYNYLGGFNGHVLPTPMMNVINGGKHANNKVDFQEFMIMPVGAKSVTEAIRMGSETFHNLKNLLNEKGYSTAVGDEGGFAPDLKNNEEPFEILVEAIKNAGYVPGKDVAIAFDCASSEFYNADTKKYELVGDGKEYTAEEFVSLLESIVDKYPVVSIEDPLDENEWEDWQMATERLGKKVQLVGDDLFVTNTDYLAKGIKMGVGNSILIKLNQIGTLTETVEAVEMAKQAGYTAVISHRSGETEDTTIADLVVALNAGQIKTGSMSRGERIAKYNQLMRIEDQLGKTSEYKGIHSFYNLDEDARMAIVNK.

Position 163 (Q163) interacts with (2R)-2-phosphoglycerate. E205 serves as the catalytic Proton donor. Residues D242, E287, and D314 each contribute to the Mg(2+) site. Residues K339, R368, S369, and K390 each coordinate (2R)-2-phosphoglycerate. K339 serves as the catalytic Proton acceptor.

Belongs to the enolase family. Requires Mg(2+) as cofactor.

Its subcellular location is the cytoplasm. The protein resides in the secreted. It is found in the cell surface. The enzyme catalyses (2R)-2-phosphoglycerate = phosphoenolpyruvate + H2O. It functions in the pathway carbohydrate degradation; glycolysis; pyruvate from D-glyceraldehyde 3-phosphate: step 4/5. Its function is as follows. Catalyzes the reversible conversion of 2-phosphoglycerate (2-PG) into phosphoenolpyruvate (PEP). It is essential for the degradation of carbohydrates via glycolysis. The protein is Enolase of Levilactobacillus brevis (strain ATCC 367 / BCRC 12310 / CIP 105137 / JCM 1170 / LMG 11437 / NCIMB 947 / NCTC 947) (Lactobacillus brevis).